The chain runs to 477 residues: Peptidyl-prolyl cis-trans isomerase FKBP53 (477 aa).

2 disordered regions span residues 104–135 (DYEHDEDDSDGIDVGESEEDDSCEYDSEEDEQ) and 153–366 (AAAP…QVRT). Residues 264 to 274 (KSKKKKNQKEK) show a composition bias toward basic residues. Residues 299-321 (ISQISSNTKAQDGTANNAMSESS) are compositionally biased toward polar residues. Over residues 322–331 (KTPDKSAEKK) the composition is skewed to basic and acidic residues. Polar residues predominate over residues 351-366 (VEKQTPADSKSSQVRT). The region spanning 389–477 (GKTVSVRYIG…TFDVELINVQ (89 aa)) is the PPIase FKBP-type domain.

It belongs to the FKBP-type PPIase family. As to quaternary structure, interacts with histone H3. Broadly expressed in leaves, flowers, stems and roots. Detected in root apical meristem region and pollen.

It is found in the nucleus. It carries out the reaction [protein]-peptidylproline (omega=180) = [protein]-peptidylproline (omega=0). PPIases accelerate the folding of proteins. It catalyzes the cis-trans isomerization of proline imidic peptide bonds in oligopeptides. Histone chaperone possibly involved in H3/H4 deposition to the nucleosome. Associates with 18S rDNA chromatin and negatively regulates the level of its expression. The polypeptide is Peptidyl-prolyl cis-trans isomerase FKBP53 (FKBP53) (Arabidopsis thaliana (Mouse-ear cress)).